We begin with the raw amino-acid sequence, 358 residues long: Fructose-bisphosphate aldolase class 2 (358 aa).

Ser61 is a binding site for D-glyceraldehyde 3-phosphate. The active-site Proton donor is Asp109. Positions 110, 144, 174, and 226 each coordinate Zn(2+). Gly227 serves as a coordination point for dihydroxyacetone phosphate. His264 contacts Zn(2+). Residues 265–267 and 286–289 each bind dihydroxyacetone phosphate; these read GGS and NIDT.

Belongs to the class II fructose-bisphosphate aldolase family. Requires Zn(2+) as cofactor.

It catalyses the reaction beta-D-fructose 1,6-bisphosphate = D-glyceraldehyde 3-phosphate + dihydroxyacetone phosphate. It participates in carbohydrate degradation; glycolysis; D-glyceraldehyde 3-phosphate and glycerone phosphate from D-glucose: step 4/4. Catalyzes the aldol condensation of dihydroxyacetone phosphate (DHAP or glycerone-phosphate) with glyceraldehyde 3-phosphate (G3P) to form fructose 1,6-bisphosphate (FBP) in gluconeogenesis and the reverse reaction in glycolysis. The sequence is that of Fructose-bisphosphate aldolase class 2 (fbaA) from Buchnera aphidicola subsp. Acyrthosiphon pisum (strain APS) (Acyrthosiphon pisum symbiotic bacterium).